The sequence spans 405 residues: Pre-mRNA-splicing factor cwc-24 (405 aa).

Disordered regions lie at residues 1–114 (MADT…NTIY) and 162–184 (TKKK…DGTY). Residues 15-29 (EPTTATPTAPIAPVA) are compositionally biased toward low complexity. Residues 31 to 46 (FKKRGAKGKANLRKRP) show a composition bias toward basic residues. Residues 56–70 (SDDDSSDFESSEDEA) show a composition bias toward acidic residues. The span at 74-83 (RIKRRKKNHH) shows a compositional bias: basic residues. The segment at 221 to 249 (DMAPDVCKDYKQTGFCGFGDNCKFLHARE) adopts a C3H1-type zinc-finger fold. The RING-type zinc finger occupies 310-349 (CIICRGPYSNSPVVTRCGHYFCEACALKRYRKDPSCAACG). A compositionally biased stretch (basic and acidic residues) spans 370–386 (KARAERLRREARERGEE). The tract at residues 370–405 (KARAERLRREARERGEEVSEEEDEGEDEGEGAEGSD) is disordered. Over residues 387–405 (VSEEEDEGEDEGEGAEGSD) the composition is skewed to acidic residues.

This sequence belongs to the CWC24 family. In terms of assembly, associated with the spliceosome.

The protein localises to the nucleus. Its function is as follows. Involved in pre-mRNA splicing. This Neurospora crassa (strain ATCC 24698 / 74-OR23-1A / CBS 708.71 / DSM 1257 / FGSC 987) protein is Pre-mRNA-splicing factor cwc-24 (cwc-24).